A 506-amino-acid polypeptide reads, in one-letter code: Protein EFFECTOR OF TRANSCRIPTION 1 (506 aa).

The 41-residue stretch at 185-225 (AFQGLYELSHDHGRKDDVLVANLGQPESIRSRLRSYSRSFA) folds into the GIY-YIG domain. Polar residues predominate over residues 234–247 (LSQTILPTTQNKSD). The tract at residues 234–298 (LSQTILPTTQ…VSEKHDDIVD (65 aa)) is disordered. Positions 248–272 (NQTEEKKSDSEEEREVSSDAAEKES) are enriched in basic and acidic residues. The segment covering 273 to 288 (NSLPSILRLSRSRPQP) has biased composition (low complexity). Cx9Cx9RCx2HK repeat units lie at residues 306 to 331 (CGVL…TEHK) and 361 to 386 (CGVI…EDHK). A compositionally biased stretch (basic and acidic residues) spans 404–413 (KAVNEDKSKP). The tract at residues 404–426 (KAVNEDKSKPETSTGMNQEGSGL) is disordered. Polar residues predominate over residues 414–423 (ETSTGMNQEG). Cx9Cx9RCx2HK repeat units lie at residues 428–453 (CEAT…WQHK) and 475–500 (CGFK…EEHK).

In terms of tissue distribution, expressed in rosette leaves, stipules, stems, flowers, siliques and mature seeds. Expressed in the vascular bundles of xylem in shoot parenchyma cells. Expressed in the remnant cytoplasm of differentiated fiber cells and in protoxylem element of parenchymal cells.

It is found in the cytoplasm. The protein localises to the nucleus. Its function is as follows. Transcriptional regulator involved in the regulation of cell differentiation in meristems. Binds DNA without sequence preference. In Arabidopsis thaliana (Mouse-ear cress), this protein is Protein EFFECTOR OF TRANSCRIPTION 1.